We begin with the raw amino-acid sequence, 779 residues long: Abnormal cell migration protein 10 (779 aa).

Residues 78-97 (NELEADTEEDIAETADDEES) are compositionally biased toward acidic residues. Disordered stretches follow at residues 78-105 (NELE…EKTE), 189-217 (SSSR…PQQP), and 242-302 (AASS…NAEE). Polar residues predominate over residues 189-200 (SSSRENVKSIST). The span at 242-254 (AASSCSSPDGDSA) shows a compositional bias: low complexity. A compositionally biased stretch (polar residues) spans 256–293 (GDSSSTESSNNRCRNSAFSSNDSCRDSLNTPSPTQVSP). One can recognise a Ras-associating domain in the interval 317–407 (EAKVTKIFVK…NKLYFMRRPD (91 aa)). The PH domain maps to 456–566 (PPEMEGFLYL…WLVALRIAKN (111 aa)). Composition is skewed to polar residues over residues 645 to 660 (SFSV…SRTS) and 688 to 698 (RASTSSPTIPQ). The segment at 645 to 763 (SFSVNSCQQS…SPMAPAKNDL (119 aa)) is disordered. Residues 708–729 (PAPPPVASVMRMPPPVTPPKPC) show a composition bias toward pro residues.

It belongs to the MRL family. In terms of assembly, may interact (via Ras-associating and PH domains) with ced-10 (GTP-bound form).

It is found in the perikaryon. Required cell non-autonomously for proper development of the excretory canals and for the long-range anterior-posterior migrations of embryonic neurons CAN, ALM and HSN. Plays a role, probably downstream of ced-10/rac1, in orientating axonal growth of HSN and AVM neurons in response to guidance cues such as slt-1. May regulate growth cone polarization by promoting asymmetric F-actin assembly. May be involved in signal transduction during cell migration. The protein is Abnormal cell migration protein 10 of Caenorhabditis elegans.